Here is an 86-residue protein sequence, read N- to C-terminus: Large ribosomal subunit protein uL23 (86 aa).

The protein belongs to the universal ribosomal protein uL23 family. Part of the 50S ribosomal subunit. Contacts protein L29.

Functionally, binds to 23S rRNA. One of the proteins that surrounds the polypeptide exit tunnel on the outside of the ribosome. This chain is Large ribosomal subunit protein uL23, found in Methanococcus vannielii (strain ATCC 35089 / DSM 1224 / JCM 13029 / OCM 148 / SB).